We begin with the raw amino-acid sequence, 510 residues long: Cobyric acid synthase (510 aa).

A GATase cobBQ-type domain is found at 249–458 (CFKVRVLVYP…LHGLFDSPDA (210 aa)). C336 serves as the catalytic Nucleophile. Residue H450 is part of the active site.

The protein belongs to the CobB/CobQ family. CobQ subfamily.

It functions in the pathway cofactor biosynthesis; adenosylcobalamin biosynthesis. In terms of biological role, catalyzes amidations at positions B, D, E, and G on adenosylcobyrinic A,C-diamide. NH(2) groups are provided by glutamine, and one molecule of ATP is hydrogenolyzed for each amidation. This Shewanella oneidensis (strain ATCC 700550 / JCM 31522 / CIP 106686 / LMG 19005 / NCIMB 14063 / MR-1) protein is Cobyric acid synthase.